The primary structure comprises 85 residues: Small ribosomal subunit protein bS20 (85 aa).

The protein belongs to the bacterial ribosomal protein bS20 family.

Functionally, binds directly to 16S ribosomal RNA. The sequence is that of Small ribosomal subunit protein bS20 from Cytophaga hutchinsonii (strain ATCC 33406 / DSM 1761 / CIP 103989 / NBRC 15051 / NCIMB 9469 / D465).